Reading from the N-terminus, the 543-residue chain is CTP synthase (543 aa).

An amidoligase domain region spans residues 1–265; it reads MARYIFITGG…DDEVLAAFGI (265 aa). Residue serine 13 coordinates CTP. A UTP-binding site is contributed by serine 13. 14-19 contributes to the ATP binding site; it reads SLGKGL. Tyrosine 54 is an L-glutamine binding site. ATP is bound at residue aspartate 71. Positions 71 and 139 each coordinate Mg(2+). CTP is bound by residues 146 to 148, 186 to 191, and lysine 222; these read DIE and KTKPTQ. Residues 186-191 and lysine 222 each bind UTP; that span reads KTKPTQ. 238 to 240 is a binding site for ATP; sequence RDV. The Glutamine amidotransferase type-1 domain maps to 291-542; the sequence is TIAIVGKYTG…IQAAVVQSRL (252 aa). Glycine 353 is an L-glutamine binding site. Residue cysteine 380 is the Nucleophile; for glutamine hydrolysis of the active site. L-glutamine is bound by residues 381–384, glutamate 404, and arginine 470; that span reads FGMQ. Catalysis depends on residues histidine 515 and glutamate 517.

The protein belongs to the CTP synthase family. Homotetramer.

The catalysed reaction is UTP + L-glutamine + ATP + H2O = CTP + L-glutamate + ADP + phosphate + 2 H(+). The enzyme catalyses L-glutamine + H2O = L-glutamate + NH4(+). It carries out the reaction UTP + NH4(+) + ATP = CTP + ADP + phosphate + 2 H(+). The protein operates within pyrimidine metabolism; CTP biosynthesis via de novo pathway; CTP from UDP: step 2/2. Allosterically activated by GTP, when glutamine is the substrate; GTP has no effect on the reaction when ammonia is the substrate. The allosteric effector GTP functions by stabilizing the protein conformation that binds the tetrahedral intermediate(s) formed during glutamine hydrolysis. Inhibited by the product CTP, via allosteric rather than competitive inhibition. Catalyzes the ATP-dependent amination of UTP to CTP with either L-glutamine or ammonia as the source of nitrogen. Regulates intracellular CTP levels through interactions with the four ribonucleotide triphosphates. The chain is CTP synthase from Bradyrhizobium sp. (strain BTAi1 / ATCC BAA-1182).